Consider the following 449-residue polypeptide: tRNA(Ile)-lysidine synthase (449 aa).

Position 35–40 (35–40 (SGGIDS)) interacts with ATP.

Belongs to the tRNA(Ile)-lysidine synthase family.

The protein resides in the cytoplasm. The enzyme catalyses cytidine(34) in tRNA(Ile2) + L-lysine + ATP = lysidine(34) in tRNA(Ile2) + AMP + diphosphate + H(+). In terms of biological role, ligates lysine onto the cytidine present at position 34 of the AUA codon-specific tRNA(Ile) that contains the anticodon CAU, in an ATP-dependent manner. Cytidine is converted to lysidine, thus changing the amino acid specificity of the tRNA from methionine to isoleucine. The sequence is that of tRNA(Ile)-lysidine synthase from Coxiella burnetii (strain RSA 493 / Nine Mile phase I).